Consider the following 136-residue polypeptide: Small ribosomal subunit protein uS8c (136 aa).

The protein belongs to the universal ribosomal protein uS8 family. Part of the 30S ribosomal subunit.

Its subcellular location is the plastid. It is found in the chloroplast. Functionally, one of the primary rRNA binding proteins, it binds directly to 16S rRNA central domain where it helps coordinate assembly of the platform of the 30S subunit. The polypeptide is Small ribosomal subunit protein uS8c (rps8) (Oryza sativa subsp. indica (Rice)).